Consider the following 245-residue polypeptide: 1-(5-phosphoribosyl)-5-[(5-phosphoribosylamino)methylideneamino] imidazole-4-carboxamide isomerase (245 aa).

The active-site Proton acceptor is the aspartate 7. Aspartate 129 acts as the Proton donor in catalysis.

Belongs to the HisA/HisF family.

It localises to the cytoplasm. The catalysed reaction is 1-(5-phospho-beta-D-ribosyl)-5-[(5-phospho-beta-D-ribosylamino)methylideneamino]imidazole-4-carboxamide = 5-[(5-phospho-1-deoxy-D-ribulos-1-ylimino)methylamino]-1-(5-phospho-beta-D-ribosyl)imidazole-4-carboxamide. It participates in amino-acid biosynthesis; L-histidine biosynthesis; L-histidine from 5-phospho-alpha-D-ribose 1-diphosphate: step 4/9. The chain is 1-(5-phosphoribosyl)-5-[(5-phosphoribosylamino)methylideneamino] imidazole-4-carboxamide isomerase from Pectobacterium atrosepticum (strain SCRI 1043 / ATCC BAA-672) (Erwinia carotovora subsp. atroseptica).